A 349-amino-acid chain; its full sequence is Probable formaldehyde dehydrogenase AdhA (349 aa).

Zn(2+) contacts are provided by Cys44, His66, Cys97, Cys100, Cys103, Cys111, and Cys161.

Belongs to the zinc-containing alcohol dehydrogenase family. Requires Zn(2+) as cofactor.

In terms of biological role, functions in the protection against aldehyde-stress. This Bacillus subtilis (strain 168) protein is Probable formaldehyde dehydrogenase AdhA (adhA).